The chain runs to 467 residues: Gamma-aminobutyric acid receptor subunit gamma-3 (467 aa).

An N-terminal signal peptide occupies residues 1-17 (MAAKLLLLLCLFSGLHA). The Extracellular segment spans residues 18-256 (RSRRVEEDEN…FELSRRMGYF (239 aa)). N-linked (GlcNAc...) asparagine glycosylation occurs at N110. Residues C171 and C185 are joined by a disulfide bond. N228 carries an N-linked (GlcNAc...) asparagine glycan. Residues 257 to 277 (TIQTYIPCILTVVLSWVSFWI) traverse the membrane as a helical segment. Over 278–283 (KKDATP) the chain is Cytoplasmic. The chain crosses the membrane as a helical span at residues 284 to 303 (ARTTLGITTVLTMTTLSTIA). Over 304-311 (RKSLPRVS) the chain is Extracellular. Residues 312–332 (YVTAMDLFVTVCFLFVFAALM) traverse the membrane as a helical segment. Topologically, residues 333 to 446 (EYATLNYYSS…DVSELDSYSR (114 aa)) are cytoplasmic. A helical transmembrane segment spans residues 447 to 467 (VFFPTSFLLFNLVYWVGYLYL).

It belongs to the ligand-gated ion channel (TC 1.A.9) family. Gamma-aminobutyric acid receptor (TC 1.A.9.5) subfamily. GABRG3 sub-subfamily. Heteropentamer, formed by a combination of alpha (GABRA1-6), beta (GABRB1-3), gamma (GABRG1-3), delta (GABRD), epsilon (GABRE), rho (GABRR1-3), pi (GABRP) and theta (GABRQ) chains, each subunit exhibiting distinct physiological and pharmacological properties. May be palmitoylated. In terms of tissue distribution, expressed in brain.

The protein localises to the postsynaptic cell membrane. It localises to the cell membrane. It carries out the reaction chloride(in) = chloride(out). Its function is as follows. Gamma subunit of the heteropentameric ligand-gated chloride channel gated by gamma-aminobutyric acid (GABA), a major inhibitory neurotransmitter in the brain. GABA-gated chloride channels, also named GABA(A) receptors (GABAAR), consist of five subunits arranged around a central pore and contain GABA active binding site(s) located at the alpha and beta subunit interface(s). When activated by GABA, GABAARs selectively allow the flow of chloride across the cell membrane down their electrochemical gradient. This Mus musculus (Mouse) protein is Gamma-aminobutyric acid receptor subunit gamma-3.